A 561-amino-acid polypeptide reads, in one-letter code: PR domain zinc finger protein 14 (561 aa).

The interval methionine 1–glutamine 20 is disordered. Polar residues predominate over residues glycine 7–glutamine 20. The tract at residues glycine 184–glutamate 373 is interaction with CBFA2T2. The region spanning glutamate 241–glycine 356 is the SET domain. Tyrosine 355 lines the S-adenosyl-L-methionine pocket. Residues tyrosine 390–aspartate 416 form a C2H2-type 1; atypical zinc finger. C2H2-type zinc fingers lie at residues phenylalanine 422–histidine 445, tyrosine 451–histidine 473, tyrosine 479–histidine 501, phenylalanine 507–histidine 530, and serine 536–histidine 558.

Belongs to the class V-like SAM-binding methyltransferase superfamily. In terms of assembly, interacts with CBFA2T2. In terms of tissue distribution, restricted to embryonic stem cells and primordial germ cells. Not detected in epiblast-derived stem cells.

The protein localises to the nucleus. Its function is as follows. Transcription factor that has both positive and negative roles on transcription. Plays a role in cellular pluripotency. Essential for germ cell development at 2 levels: the reacquisition of potential pluripotency, including SOX2 up-regulation, and successful epigenetic reprogramming, characterized by EHMT1 repression. Its association with CBFA2T2 is required for the functions in pluripotency and germ cell formation. This Mus musculus (Mouse) protein is PR domain zinc finger protein 14 (Prdm14).